We begin with the raw amino-acid sequence, 170 residues long: Shikimate kinase (170 aa).

Leu11–Thr16 serves as a coordination point for ATP. Residue Ser15 coordinates Mg(2+). The substrate site is built by Asp33, Arg57, and Gly79. ATP is bound at residue Arg119. Arg137 is a substrate binding site.

It belongs to the shikimate kinase family. As to quaternary structure, monomer. It depends on Mg(2+) as a cofactor.

The protein resides in the cytoplasm. The catalysed reaction is shikimate + ATP = 3-phosphoshikimate + ADP + H(+). Its pathway is metabolic intermediate biosynthesis; chorismate biosynthesis; chorismate from D-erythrose 4-phosphate and phosphoenolpyruvate: step 5/7. Functionally, catalyzes the specific phosphorylation of the 3-hydroxyl group of shikimic acid using ATP as a cosubstrate. The protein is Shikimate kinase of Clostridium botulinum (strain Loch Maree / Type A3).